A 356-amino-acid chain; its full sequence is INO80 complex subunit B (356 aa).

The disordered stretch occupies residues methionine 1 to leucine 71. Basic residues predominate over residues histidine 33–histidine 51. Phosphoserine occurs at positions 97, 99, 127, 130, and 132. The disordered stretch occupies residues aspartate 124–glutamine 150. Residues leucine 213–threonine 245 are a coiled coil. Disordered regions lie at residues alanine 246 to proline 269 and phenylalanine 286 to serine 310. The HIT-type zinc finger occupies proline 305–arginine 336.

As to quaternary structure, component of the chromatin remodeling INO80 complex; specifically part of a complex module associated with the helicase ATP-binding and the helicase C-terminal domain of INO80. Interacts with RP9.

It is found in the nucleus. It localises to the nucleolus. Induces growth and cell cycle arrests at the G1 phase of the cell cycle. In terms of biological role, proposed core component of the chromatin remodeling INO80 complex which is involved in transcriptional regulation, DNA replication and probably DNA repair. This is INO80 complex subunit B (INO80B) from Homo sapiens (Human).